Reading from the N-terminus, the 103-residue chain is MAGQKIRIRLRAYDHEVIDSSARKIVDTVTRTGAKVAGPVPLPTEKNVFCVIRSPHKYKDSREHFEMRTHKRLIDILEPTPKTVDSLMRLDLPAGVDIEIKLP.

The protein belongs to the universal ribosomal protein uS10 family. As to quaternary structure, part of the 30S ribosomal subunit.

Functionally, involved in the binding of tRNA to the ribosomes. This Cutibacterium acnes (strain DSM 16379 / KPA171202) (Propionibacterium acnes) protein is Small ribosomal subunit protein uS10.